The sequence spans 508 residues: Ell-associated factor Eaf (508 aa).

Composition is skewed to polar residues over residues 140 to 150 (GQGQLHSQGAN) and 161 to 190 (GHSTGTAPKMENSTMRISTKTKVSTGSRRN). 2 disordered regions span residues 140-226 (GQGQ…WDAN) and 251-508 (HNSG…DDDE). A Phosphoserine modification is found at Ser200. Positions 251 to 268 (HNSGHANTSGSSTGSATG) are enriched in low complexity. Polar residues-rich tracts occupy residues 272 to 281 (FGSTSSSSHM) and 296 to 313 (QQMQQRLSPPMAQQQQPS). The span at 314-341 (NYGRGYNGGHNHVQQQQQRNSPQQQRPP) shows a compositional bias: low complexity. Residues 391-406 (DSSDSDSGSDSDDSTE) are compositionally biased toward acidic residues. Low complexity-rich tracts occupy residues 412 to 444 (QGQQQDHQQQQQQQVYQNHNHQQQQIAQQHLNQ), 461 to 477 (HQHQQQMAPHQQQQKQQ), and 489 to 502 (NDLLQNDLQLSSNS).

The protein belongs to the EAF family.

Its subcellular location is the nucleus. Its function is as follows. Promotes transcriptional elongation by Su(Tpl)/ELL. Essential for development. In Drosophila erecta (Fruit fly), this protein is Ell-associated factor Eaf.